The chain runs to 697 residues: Elongation factor G (697 aa).

The region spanning 10 to 285 is the tr-type G domain; it reads EKTRNIGIVA…GVNDYLPSPL (276 aa). GTP is bound by residues 19–26, 83–87, and 137–140; these read AHIDAGKT, DTPGH, and NKMD.

The protein belongs to the TRAFAC class translation factor GTPase superfamily. Classic translation factor GTPase family. EF-G/EF-2 subfamily.

It is found in the cytoplasm. Catalyzes the GTP-dependent ribosomal translocation step during translation elongation. During this step, the ribosome changes from the pre-translocational (PRE) to the post-translocational (POST) state as the newly formed A-site-bound peptidyl-tRNA and P-site-bound deacylated tRNA move to the P and E sites, respectively. Catalyzes the coordinated movement of the two tRNA molecules, the mRNA and conformational changes in the ribosome. The protein is Elongation factor G of Ligilactobacillus salivarius (strain UCC118) (Lactobacillus salivarius).